A 547-amino-acid chain; its full sequence is MSELIRVPDIGNGEGEVIELLVKPGDKVEADQSLLTLESDKASMEIPSPKAGVVKSIKAKVGDTLKEGDEILELEVEGGEQPAEAKAEAAPAQPEAPKAEAPAPAPSESKPAAPAAASVQDIKVPDIGSAGKANVIEVMVKAGDTVEADQSLITLESDKASMEIPSPASGVVESVSIKVGDEVGTGDLILKLKVEGAAPAAEEQPAAAPAQAAAPAAEQKPAAAAPAPAKADTPAPVGAPSRDGAKVHAGPAVRMLAREFGVELSEVKASGPKGRILKEDVQVFVKEQLQRAKSGGAGATGGAGIPPIPEVDFSKFGEVEEVAMTRLMQVGAANLHRSWLNVPHVTQFDQSDITDMEAFRVAQKAAAEKAGVKLTVLPILLKACAHLLKELPDFNSSLAPSGKALIRKKYVHIGFAVDTPDGLLVPVIRDVDRKSLLQLAAEAADLADKARNKKLSADAMQGACFTISSLGHIGGTGFTPIVNAPEVAILGVSKATMQPVWDGKAFQPRLMLPLSLSYDHRVINGAAAARFTKRLGELLADIRTLLL.

One can recognise a Lipoyl-binding 1 domain in the interval 2–75 (SELIRVPDIG…KEGDEILELE (74 aa)). Lys-41 carries the N6-lipoyllysine modification. Residues 75-117 (EVEGGEQPAEAKAEAAPAQPEAPKAEAPAPAPSESKPAAPAAA) form a disordered region. Positions 80–117 (EQPAEAKAEAAPAQPEAPKAEAPAPAPSESKPAAPAAA) are enriched in low complexity. The 75-residue stretch at 119–193 (VQDIKVPDIG…GTGDLILKLK (75 aa)) folds into the Lipoyl-binding 2 domain. Lys-159 carries the N6-lipoyllysine modification. Over residues 202-231 (EEQPAAAPAQAAAPAAEQKPAAAAPAPAKA) the composition is skewed to low complexity. The segment at 202-248 (EEQPAAAPAQAAAPAAEQKPAAAAPAPAKADTPAPVGAPSRDGAKVH) is disordered. The Peripheral subunit-binding (PSBD) domain maps to 248–285 (HAGPAVRMLAREFGVELSEVKASGPKGRILKEDVQVFV). The active site involves His-520.

It belongs to the 2-oxoacid dehydrogenase family. Forms a 24-polypeptide structural core with octahedral symmetry. (R)-lipoate is required as a cofactor.

It catalyses the reaction N(6)-[(R)-dihydrolipoyl]-L-lysyl-[protein] + acetyl-CoA = N(6)-[(R)-S(8)-acetyldihydrolipoyl]-L-lysyl-[protein] + CoA. In terms of biological role, the pyruvate dehydrogenase complex catalyzes the overall conversion of pyruvate to acetyl-CoA and CO(2). It contains multiple copies of three enzymatic components: pyruvate dehydrogenase (E1), dihydrolipoamide acetyltransferase (E2) and lipoamide dehydrogenase (E3). The polypeptide is Dihydrolipoyllysine-residue acetyltransferase component of pyruvate dehydrogenase complex (aceF) (Pseudomonas aeruginosa (strain ATCC 15692 / DSM 22644 / CIP 104116 / JCM 14847 / LMG 12228 / 1C / PRS 101 / PAO1)).